We begin with the raw amino-acid sequence, 223 residues long: Deoxyribose-phosphate aldolase (223 aa).

D89 functions as the Proton donor/acceptor in the catalytic mechanism. K152 serves as the catalytic Schiff-base intermediate with acetaldehyde. The active-site Proton donor/acceptor is K181.

This sequence belongs to the DeoC/FbaB aldolase family. DeoC type 1 subfamily.

It localises to the cytoplasm. It catalyses the reaction 2-deoxy-D-ribose 5-phosphate = D-glyceraldehyde 3-phosphate + acetaldehyde. The protein operates within carbohydrate degradation; 2-deoxy-D-ribose 1-phosphate degradation; D-glyceraldehyde 3-phosphate and acetaldehyde from 2-deoxy-alpha-D-ribose 1-phosphate: step 2/2. In terms of biological role, catalyzes a reversible aldol reaction between acetaldehyde and D-glyceraldehyde 3-phosphate to generate 2-deoxy-D-ribose 5-phosphate. This chain is Deoxyribose-phosphate aldolase, found in Bacillus cereus (strain G9842).